The primary structure comprises 342 residues: viral G-protein coupled receptor (342 aa).

Topologically, residues 1 to 51 (MAAEDFLTIFLDDDESWNETLNMSGYDYSGNFSLEVSVCEMTTVVPYTWNV) are extracellular. N-linked (GlcNAc...) asparagine; by host glycosylation is found at N18, N22, and N31. A helical transmembrane segment spans residues 52-72 (GILSLIFLINVLGNGLVTYIF). The Cytoplasmic portion of the chain corresponds to 73–92 (CKHRSRAGAIDILLLGICLN). The helical transmembrane segment at 93 to 113 (SLCLSISLLAEVLMFLFPNII) threads the bilayer. Topologically, residues 114-121 (STGLCRLE) are extracellular. The chain crosses the membrane as a helical span at residues 122 to 142 (IFFYYLYVYLDIFSVVCVSLV). Over 143-159 (RYLLVAYSTRSWPKKQS) the chain is Cytoplasmic. A helical transmembrane segment spans residues 160 to 180 (LGWVLTSAALLIALVLSGDAC). The Extracellular portion of the chain corresponds to 181–217 (RHRSRVVDPVSKQAMCYENAGNMTADWRLHVRTVSVT). Residues 218–238 (AGFLLPLALLILFYALTWCVV) form a helical membrane-spanning segment. Over 239 to 251 (RRTKLQARRKVRG) the chain is Cytoplasmic. Residues 252 to 272 (VIVAVVLLFFVFCFPYHVLNL) form a helical membrane-spanning segment. Residues 273–293 (LDTLLRRRWIRDSCYTRGLIN) are Extracellular-facing. The chain crosses the membrane as a helical span at residues 294-314 (VGLAVTSLLQALYSAVVPLIY). Topologically, residues 315–342 (SCLGSLFRQRMYGLFQSLRQSFMSGATT) are cytoplasmic.

The protein belongs to the G-protein coupled receptor 1 family. In terms of assembly, interacts with protein K7; this interaction promotes vGPCR proteasomal degradation. Interacts with host CADM1; this interaction is essential for chronic NF-kappa-B activation.

It is found in the host cell membrane. Functionally, receptor that signals constitutively via several signaling pathways including PI3K/AKT as well as mitogen- and stress-activated/MAP kinases. Promotes host cell proliferation and survival, modulates cell migration, stimulates angiogenesis, and recruits inflammatory cells, both in expressing cells and in neighboring cells. Maintains chronic activation of NF-kappa-B via interaction with host CADM1. The polypeptide is viral G-protein coupled receptor (ORF74) (Human herpesvirus 8 type P (isolate GK18) (HHV-8)).